The primary structure comprises 290 residues: uncharacterized protein (290 aa).

Disordered stretches follow at residues 105 to 156 (LKHK…KLTV) and 259 to 290 (EGAQRDRFPGRKQPGVHEEPVLKKWPKLKSKK). Polar residues predominate over residues 114 to 130 (KATQQARKRNFISSKSK). 2 stretches are compositionally biased toward basic and acidic residues: residues 143–156 (RESKESSKEKKLTV) and 261–280 (AQRDRFPGRKQPGVHEEPVL).

This is an uncharacterized protein from Homo sapiens (Human).